Reading from the N-terminus, the 262-residue chain is Aminoglycoside (3'') (9) adenylyltransferase (262 aa).

Positions 1-157 (MTLSIPPSIQ…ERAERLFTPA (157 aa)) are adenylyltransferase domain. ATP-binding residues include serine 36, serine 46, and aspartate 47. Residues aspartate 47, aspartate 49, and glutamate 87 each coordinate Mg(2+). The Proton acceptor role is filled by glutamate 87. Position 130 (aspartate 130) interacts with ATP. The tract at residues 158–262 (PAAQLLKALR…AKAHIPTQFT (105 aa)) is helical domain. Residues 173–178 (WQSTAD) and histidine 185 contribute to the streptomycin site. ATP is bound by residues lysine 205 and tyrosine 231.

In terms of assembly, monomer.

It carries out the reaction streptomycin + ATP = 3''-O-adenylylstreptomycin + diphosphate. The catalysed reaction is spectinomycin + ATP = 9-O-adenylylspectinomycin + diphosphate. Mediates bacterial resistance to the antibiotics streptomycin and spectinomycin, does not confer resistance to kanamycin. Binds ATP first, then antibiotic. In Salmonella typhimurium (strain LT2 / SGSC1412 / ATCC 700720), this protein is Aminoglycoside (3'') (9) adenylyltransferase (aadA).